We begin with the raw amino-acid sequence, 381 residues long: MNTNNKNDFKSVYVSSRARDNILKYKYTGCDSSFISIHIMNHFWNWFVNLFPRSFAPNLITLFGFISIIVSYFVTLYYMDRMNGVAPKWLYLFNALCIFIYQTMDACDGKQARRVQASSGLGELFDHGCDAMITYLVMQTFQSSLQVGVNQISFFTTLWIMYVFFMAQLEQYSTGVMNLGHFGPTESQFSMMAGHIFTFFYGEQFWFNTIKFESFEIQYNHLVLLVVILGGVGTILLNTFSILKNGNESILTNIINLVPISILLGVSIYWGKYSTVNIFETAPHYFMGIFGILFALVTGKLILARICMDKLSPIQLIMLPLIAVILNIYKFNGELFDEILFTKVYFFVVFIVYIHFAYDVVTSLTKVLDIYCFTLKNKKQT.

A run of 9 helical transmembrane segments spans residues 59–79, 84–104, 147–167, 190–210, 222–242, 250–270, 284–304, 311–331, and 344–364; these read LITLFGFISIIVSYFVTLYYM, GVAPKWLYLFNALCIFIYQTM, VGVNQISFFTTLWIMYVFFMA, SMMAGHIFTFFYGEQFWFNTI, LVLLVVILGGVGTILLNTFSI, ILTNIINLVPISILLGVSIYW, HYFMGIFGILFALVTGKLILA, LSPIQLIMLPLIAVILNIYKF, and VYFFVVFIVYIHFAYDVVTSL.

This sequence belongs to the CDP-alcohol phosphatidyltransferase class-I family.

Its subcellular location is the membrane. This is an uncharacterized protein from Dictyostelium discoideum (Social amoeba).